The following is a 543-amino-acid chain: Chaperonin GroEL 2 (543 aa).

Residues 29-32 (TLGP), 86-90 (DGTTT), G413, 477-479 (DAA), and D493 each bind ATP. A disordered region spans residues 523–543 (PQEPEPAAGGHGHGHQHGPGF). Residues 534-543 (GHGHQHGPGF) show a composition bias toward basic residues.

Belongs to the chaperonin (HSP60) family. In terms of assembly, forms a cylinder of 14 subunits composed of two heptameric rings stacked back-to-back. Interacts with the co-chaperonin GroES.

Its subcellular location is the cytoplasm. The enzyme catalyses ATP + H2O + a folded polypeptide = ADP + phosphate + an unfolded polypeptide.. Together with its co-chaperonin GroES, plays an essential role in assisting protein folding. The GroEL-GroES system forms a nano-cage that allows encapsulation of the non-native substrate proteins and provides a physical environment optimized to promote and accelerate protein folding. This chain is Chaperonin GroEL 2, found in Salinispora tropica (strain ATCC BAA-916 / DSM 44818 / JCM 13857 / NBRC 105044 / CNB-440).